We begin with the raw amino-acid sequence, 182 residues long: ATP synthase subunit delta (182 aa).

It belongs to the ATPase delta chain family. As to quaternary structure, F-type ATPases have 2 components, F(1) - the catalytic core - and F(0) - the membrane proton channel. F(1) has five subunits: alpha(3), beta(3), gamma(1), delta(1), epsilon(1). CF(0) has four main subunits: a(1), b(1), b'(1) and c(10-14). The alpha and beta chains form an alternating ring which encloses part of the gamma chain. F(1) is attached to F(0) by a central stalk formed by the gamma and epsilon chains, while a peripheral stalk is formed by the delta, b and b' chains.

It is found in the cellular thylakoid membrane. Functionally, f(1)F(0) ATP synthase produces ATP from ADP in the presence of a proton or sodium gradient. F-type ATPases consist of two structural domains, F(1) containing the extramembraneous catalytic core and F(0) containing the membrane proton channel, linked together by a central stalk and a peripheral stalk. During catalysis, ATP synthesis in the catalytic domain of F(1) is coupled via a rotary mechanism of the central stalk subunits to proton translocation. This protein is part of the stalk that links CF(0) to CF(1). It either transmits conformational changes from CF(0) to CF(1) or is implicated in proton conduction. This is ATP synthase subunit delta from Prochlorococcus marinus (strain NATL2A).